We begin with the raw amino-acid sequence, 246 residues long: tRNA (guanine-N(1)-)-methyltransferase (246 aa).

S-adenosyl-L-methionine-binding positions include glycine 113 and 133–138; that span reads IGDYVL.

It belongs to the RNA methyltransferase TrmD family. Homodimer.

It is found in the cytoplasm. It catalyses the reaction guanosine(37) in tRNA + S-adenosyl-L-methionine = N(1)-methylguanosine(37) in tRNA + S-adenosyl-L-homocysteine + H(+). In terms of biological role, specifically methylates guanosine-37 in various tRNAs. The polypeptide is tRNA (guanine-N(1)-)-methyltransferase (Yersinia enterocolitica serotype O:8 / biotype 1B (strain NCTC 13174 / 8081)).